A 148-amino-acid polypeptide reads, in one-letter code: MFDPTLLILLALAALGFISHNTTVAISILVLIIVRVTPLNTFFPWIEKQGLTIGIIILTIGVMAPIASGTLPASTLLHSFVNWKSLIAIAVGVFVSWLGGRGVTLMSSQPSLVAGLLVGTVLGVALFRGVPVGPLIAAGLVSLFIGKS.

The next 4 helical transmembrane spans lie at 14–34, 51–71, 86–106, and 121–141; these read ALGF…LIIV, LTIG…SGTL, LIAI…VTLM, and VLGV…AGLV.

This sequence belongs to the UPF0756 family.

The protein localises to the cell membrane. This is UPF0756 membrane protein Ent638_1667 from Enterobacter sp. (strain 638).